A 440-amino-acid chain; its full sequence is GTPase Der (440 aa).

EngA-type G domains are found at residues 4–168 (PIVA…PENK) and 177–352 (IKVA…NQRA). GTP-binding positions include 10–17 (GRPNVGKS), 57–61 (DTGGI), 120–123 (NKVD), 183–190 (GKPNVGKS), 230–234 (DTAGL), and 295–298 (NKWD). The 85-residue stretch at 353–437 (MRVPTGGLNE…PIRFIYREKS (85 aa)) folds into the KH-like domain.

This sequence belongs to the TRAFAC class TrmE-Era-EngA-EngB-Septin-like GTPase superfamily. EngA (Der) GTPase family. As to quaternary structure, associates with the 50S ribosomal subunit.

GTPase that plays an essential role in the late steps of ribosome biogenesis. The sequence is that of GTPase Der from Alkaliphilus metalliredigens (strain QYMF).